Here is a 237-residue protein sequence, read N- to C-terminus: Uridylate kinase (237 aa).

12–15 (KLSG) is a binding site for ATP. An involved in allosteric activation by GTP region spans residues 20–25 (GENGYG). G54 is a binding site for UMP. Positions 55 and 59 each coordinate ATP. UMP contacts are provided by residues D72 and 133–140 (TGNPYFST). Residues Y166 and D169 each contribute to the ATP site.

The protein belongs to the UMP kinase family. In terms of assembly, homohexamer.

Its subcellular location is the cytoplasm. The catalysed reaction is UMP + ATP = UDP + ADP. The protein operates within pyrimidine metabolism; CTP biosynthesis via de novo pathway; UDP from UMP (UMPK route): step 1/1. Allosterically activated by GTP. Inhibited by UTP. Functionally, catalyzes the reversible phosphorylation of UMP to UDP. The chain is Uridylate kinase from Clostridium tetani (strain Massachusetts / E88).